Here is a 211-residue protein sequence, read N- to C-terminus: Shikimate kinase (211 aa).

The disordered stretch occupies residues 1–22 (MHFRYNYRMQRSKTPNTKNSDT). Over residues 12-22 (SKTPNTKNSDT) the composition is skewed to polar residues. Position 36–41 (36–41 (GSGKTT)) interacts with ATP. T40 contacts Mg(2+). Substrate contacts are provided by D58, R82, and G104. R142 is a binding site for ATP. R161 lines the substrate pocket. Q178 contacts ATP.

Belongs to the shikimate kinase family. As to quaternary structure, monomer. The cofactor is Mg(2+).

The protein resides in the cytoplasm. It carries out the reaction shikimate + ATP = 3-phosphoshikimate + ADP + H(+). It functions in the pathway metabolic intermediate biosynthesis; chorismate biosynthesis; chorismate from D-erythrose 4-phosphate and phosphoenolpyruvate: step 5/7. Its function is as follows. Catalyzes the specific phosphorylation of the 3-hydroxyl group of shikimic acid using ATP as a cosubstrate. This Nitrosomonas europaea (strain ATCC 19718 / CIP 103999 / KCTC 2705 / NBRC 14298) protein is Shikimate kinase.